Consider the following 130-residue polypeptide: UPF0146 protein AF_0739.1 (130 aa).

This sequence belongs to the UPF0146 family.

This chain is UPF0146 protein AF_0739.1, found in Archaeoglobus fulgidus (strain ATCC 49558 / DSM 4304 / JCM 9628 / NBRC 100126 / VC-16).